The primary structure comprises 53 residues: Small, acid-soluble spore protein K (53 aa).

Residues 1–53 (MGRQAEFWSESKNNSKIDGQPKAKARFASKRPNGTINTHPQERMRAANQQEEE) form a disordered region.

The protein belongs to the SspK family.

The protein resides in the spore core. This chain is Small, acid-soluble spore protein K, found in Bacillus cytotoxicus (strain DSM 22905 / CIP 110041 / 391-98 / NVH 391-98).